An 855-amino-acid chain; its full sequence is DNA mismatch repair protein MutS (855 aa).

Position 613–620 (613–620 (GPNMGGKS)) interacts with ATP. Residues 796-817 (TTSLPHEQPRAKPGKPAIPQQS) are disordered.

Belongs to the DNA mismatch repair MutS family.

Its function is as follows. This protein is involved in the repair of mismatches in DNA. It is possible that it carries out the mismatch recognition step. This protein has a weak ATPase activity. This is DNA mismatch repair protein MutS from Pseudomonas syringae pv. tomato (strain ATCC BAA-871 / DC3000).